The chain runs to 587 residues: MDPSGSDEDADADFDTQVIIQQSLLDVYKPGIAQHTPEAARLHSFPSDDYKKIAEAIETGKEDALAGFAKYHPAFDEANGNGWLPLHKAAVQLNKNILEITMNASEPSTWERTTHNGETALFLAVSSSLLENAHFLLLKGCNPNAKTSEGNSPLLTAVLKDAYDMATLLISHGADVNLRCANERTALHEAAKLGRLDMVKLMLASGAYPDARSSYGFTPLALAAQGGHTGIMQLLLQKGADVHSQASDSSSVLLEAVRGGNPEAVSLLLEYGADANIPKSSGHLPIHVAADKGHFLALKVLVPVTDIAAIKKSGISPVHCAAAGAHPHCLELLIQAGFDVNFMLDQRIRKHYDDQRKSALYFAVSNGDLPSVKLLLSAGALPNQDPVNCLQIALRMGNYELISLLLRHGANVNYFCRVNPLHFPSALQYTLKDEVMLRMLLNYGYDTERCFDCPHGERVHRFCTFEGWTSTVIKDTMFCEVITLSWLQHLSGKVVRVMLDYVDQVQICSKLKAVLEKQRLWPEIHFILANPRSLQHLCRLKIRKCMGRLRLRCPVFMSFLPLPNLLKAYVLYKEYDLFGQERSTGTW.

11 ANK repeats span residues 81–110, 116–145, 149–178, 182–211, 215–244, 248–277, 281–310, 313–342, 355–384, 385–414, and 416–449; these read NGWLPLHKAAVQLNKNILEITMNASEPSTW, NGETALFLAVSSSLLENAHFLLLKGCNPNA, EGNSPLLTAVLKDAYDMATLLISHGADVNL, NERTALHEAAKLGRLDMVKLMLASGAYPDA, YGFTPLALAAQGGHTGIMQLLLQKGADVHS, DSSSVLLEAVRGGNPEAVSLLLEYGADANI, SGHLPIHVAADKGHFLALKVLVPVTDIAAI, SGISPVHCAAAGAHPHCLELLIQAGFDVNF, QRKSALYFAVSNGDLPSVKLLLSAGALPNQ, DPVNCLQIALRMGNYELISLLLRHGANVNY, and CRVNPLHFPSALQYTLKDEVMLRMLLNYGYDTER. One can recognise an SOCS box domain in the interval 521–576; that stretch reads WPEIHFILANPRSLQHLCRLKIRKCMGRLRLRCPVFMSFLPLPNLLKAYVLYKEYD.

The protein belongs to the ankyrin SOCS box (ASB) family. As to quaternary structure, interacts with MAPRE2; this interaction promotes MAPRE2 degradation.

It functions in the pathway protein modification; protein ubiquitination. In terms of biological role, may be a substrate-recognition component of a SCF-like ECS (Elongin-Cullin-SOCS-box protein) E3 ubiquitin-protein ligase complex which mediates the ubiquitination and subsequent proteasomal degradation of target proteins. Plays a role in the inhibition of cardiomyocyte nuclear proliferation by mediating the ubiquitination and degradation of MAPRE2. This is Ankyrin repeat and SOCS box protein 14 (Asb14) from Mus musculus (Mouse).